Reading from the N-terminus, the 133-residue chain is Large ribosomal subunit protein uL16 (133 aa).

It belongs to the universal ribosomal protein uL16 family. Part of the 50S ribosomal subunit.

Its function is as follows. Binds 23S rRNA and is also seen to make contacts with the A and possibly P site tRNAs. This Blochmanniella floridana protein is Large ribosomal subunit protein uL16.